The chain runs to 646 residues: Macrolide export ATP-binding/permease protein MacB (646 aa).

Residues 5 to 243 (IELKGVSRTY…TLPKTNRIRQ (239 aa)) enclose the ABC transporter domain. Residue 41-48 (GASGSGKS) coordinates ATP. A run of 4 helical transmembrane segments spans residues 272–292 (TLTM…VALG), 518–538 (FSIL…IGVM), 570–590 (IIEA…LSYI), and 611–631 (AAVA…YLPA).

Belongs to the ABC transporter superfamily. Macrolide exporter (TC 3.A.1.122) family. As to quaternary structure, homodimer. Part of the tripartite efflux system MacAB-TolC, which is composed of an inner membrane transporter, MacB, a periplasmic membrane fusion protein, MacA, and an outer membrane component, TolC. The complex forms a large protein conduit and can translocate molecules across both the inner and outer membranes. Interacts with MacA.

The protein resides in the cell inner membrane. Functionally, part of the tripartite efflux system MacAB-TolC. MacB is a non-canonical ABC transporter that contains transmembrane domains (TMD), which form a pore in the inner membrane, and an ATP-binding domain (NBD), which is responsible for energy generation. Confers resistance against macrolides. This chain is Macrolide export ATP-binding/permease protein MacB, found in Escherichia coli.